Here is a 232-residue protein sequence, read N- to C-terminus: 2,3,4,5-tetrahydropyridine-2,6-dicarboxylate N-acetyltransferase (232 aa).

The protein belongs to the transferase hexapeptide repeat family. DapH subfamily.

It carries out the reaction (S)-2,3,4,5-tetrahydrodipicolinate + acetyl-CoA + H2O = L-2-acetamido-6-oxoheptanedioate + CoA. It participates in amino-acid biosynthesis; L-lysine biosynthesis via DAP pathway; LL-2,6-diaminopimelate from (S)-tetrahydrodipicolinate (acetylase route): step 1/3. In terms of biological role, catalyzes the transfer of an acetyl group from acetyl-CoA to tetrahydrodipicolinate. The polypeptide is 2,3,4,5-tetrahydropyridine-2,6-dicarboxylate N-acetyltransferase (Streptococcus pneumoniae (strain CGSP14)).